The sequence spans 439 residues: MQAYFEQIEKVRYEGSQSSNPFAFRHYNPDQEILGKRMADHLRFAVAYWHTFCWNGSDMFGVGSFARPWQQSGDALELAKRKADIAFEFFQKLSVPYYCFHDVDVAPEGNSLKEYLHNIAVITDVLAEKQQDSGVKLLWGTANCFTNPRYGAGAATNPDPDVFAWAATQVFTAMNATKTLGGENYVLWGGREGYETLLNTDLRQEREQIGRFMQMVVEHKHKIGFQGTLLIEPKPQEPTKHQYDYDVATVYGFLKQFGLEKEIKVNVEANHATLAGHSFHHEIATAVALGVFGSVDANRGDPQLGWDTDQFPNSVEENTLIMYEILKAGGFTTGGLNFDAKVRRQSTDRYDLFHAHIGAMDTMALALKAAARMIEDDKLNQLVAKRYAGWNGELGQQILQGNASLESLAQYAESHQLAPQHQSGQQELLENLVNRHLFG.

Catalysis depends on residues His-101 and Asp-104. Mg(2+) is bound by residues Glu-232, Glu-268, His-271, Asp-296, Asp-307, Asp-309, and Asp-339.

Belongs to the xylose isomerase family. Homotetramer. The cofactor is Mg(2+).

The protein localises to the cytoplasm. It carries out the reaction alpha-D-xylose = alpha-D-xylulofuranose. This Pectobacterium atrosepticum (strain SCRI 1043 / ATCC BAA-672) (Erwinia carotovora subsp. atroseptica) protein is Xylose isomerase.